Reading from the N-terminus, the 312-residue chain is Olfactory receptor 14C36 (312 aa).

Topologically, residues 1 to 23 (MPNSTTVMEFLLMRFSDVWTLQI) are extracellular. An N-linked (GlcNAc...) asparagine glycan is attached at N3. A helical transmembrane segment spans residues 24–44 (LHSASFFMLYLVTLMGNILIV). Residues 45–52 (TVTTCDSS) are Cytoplasmic-facing. Residues 53-73 (LHMPMYFFLRNLSILDACYIS) traverse the membrane as a helical segment. Residues 74-97 (VTVPTSCVNSLLDSTTISKAGCVA) are Extracellular-facing. C95 and C187 are oxidised to a cystine. The helical transmembrane segment at 98–118 (QVFLVVFFVYVELLFLTIMAH) threads the bilayer. The Cytoplasmic portion of the chain corresponds to 119 to 137 (DRYVAVCQPLHYPVIVNSR). Residues 138-158 (ICIQMTLASLLSGLVYAGMHT) form a helical membrane-spanning segment. The Extracellular segment spans residues 159–194 (GSTFQLPFCRSNVIHQFFCDIPSLLKLSCSDTFSNE). A helical membrane pass occupies residues 195 to 215 (VMIVVSALGVGGGCFIFIIRS). Over 216 to 235 (YIHIFSTVLGFPRGADRTKA) the chain is Cytoplasmic. A helical transmembrane segment spans residues 236 to 256 (FSTCIPHILVVSVFLSSCSSV). Topologically, residues 257 to 269 (YLRPPAIPAATQD) are extracellular. A helical transmembrane segment spans residues 270 to 290 (LILSGFYSIMPPLFNPIIYSL). Topologically, residues 291–312 (RNKQIKVAIKKIMKRIFYSENV) are cytoplasmic.

It belongs to the G-protein coupled receptor 1 family.

The protein resides in the cell membrane. In terms of biological role, odorant receptor. The polypeptide is Olfactory receptor 14C36 (OR14C36) (Homo sapiens (Human)).